The sequence spans 28 residues: Ribosome-inactivating protein pleuturegin (28 aa).

It belongs to the ribosome-inactivating protein family.

It catalyses the reaction Endohydrolysis of the N-glycosidic bond at one specific adenosine on the 28S rRNA.. In terms of biological role, inhibits protein synthesis in animal cells. Does not possess ribonuclease activity. In Pleurotus tuber-regium (King tuber oyster mushroom), this protein is Ribosome-inactivating protein pleuturegin.